We begin with the raw amino-acid sequence, 756 residues long: ATP-dependent 6-phosphofructokinase 2 (756 aa).

The N-terminal catalytic PFK domain 1 stretch occupies residues 1 to 393 (MEQKFKKGKD…KQTYLNFVSI (393 aa)). ATP-binding positions include Gly20, 81 to 82 (RC), and 111 to 114 (GDGS). Asp112 contributes to the Mg(2+) binding site. Substrate is bound by residues 157–159 (SID), Arg194, 201–203 (MGR), Glu257, Arg285, and 291–294 (HLQR). Residue Asp159 is the Proton acceptor of the active site. Positions 394–404 (PLSTTMPSRTK) are interdomain linker. The tract at residues 405 to 756 (TFAVVHIGSP…KKPQEAVLSS (352 aa)) is C-terminal regulatory PFK domain 2. Residues Arg474, 530-534 (TISNN), 575-577 (MGS), Glu632, Arg658, and 664-667 (YSQL) each bind beta-D-fructose 2,6-bisphosphate.

Belongs to the phosphofructokinase type A (PFKA) family. ATP-dependent PFK group I subfamily. Eukaryotic two domain clade 'E' sub-subfamily. As to quaternary structure, homotetramer. It depends on Mg(2+) as a cofactor.

Its subcellular location is the cytoplasm. It carries out the reaction beta-D-fructose 6-phosphate + ATP = beta-D-fructose 1,6-bisphosphate + ADP + H(+). The protein operates within carbohydrate degradation; glycolysis; D-glyceraldehyde 3-phosphate and glycerone phosphate from D-glucose: step 3/4. With respect to regulation, allosterically activated by ADP, AMP, or fructose 2,6-bisphosphate, and allosterically inhibited by ATP or citrate. Its function is as follows. Catalyzes the phosphorylation of D-fructose 6-phosphate to fructose 1,6-bisphosphate by ATP, the first committing step of glycolysis. This is ATP-dependent 6-phosphofructokinase 2 from Caenorhabditis elegans.